A 296-amino-acid chain; its full sequence is ATP synthase gamma chain (296 aa).

Belongs to the ATPase gamma chain family. In terms of assembly, F-type ATPases have 2 components, CF(1) - the catalytic core - and CF(0) - the membrane proton channel. CF(1) has five subunits: alpha(3), beta(3), gamma(1), delta(1), epsilon(1). CF(0) has three main subunits: a, b and c.

Its subcellular location is the cell inner membrane. Its function is as follows. Produces ATP from ADP in the presence of a proton gradient across the membrane. The gamma chain is believed to be important in regulating ATPase activity and the flow of protons through the CF(0) complex. This chain is ATP synthase gamma chain, found in Jannaschia sp. (strain CCS1).